Reading from the N-terminus, the 940-residue chain is Phosphoenolpyruvate carboxylase (940 aa).

Active-site residues include H138 and K603.

Belongs to the PEPCase type 1 family. The cofactor is Mg(2+).

The enzyme catalyses oxaloacetate + phosphate = phosphoenolpyruvate + hydrogencarbonate. Functionally, forms oxaloacetate, a four-carbon dicarboxylic acid source for the tricarboxylic acid cycle. The sequence is that of Phosphoenolpyruvate carboxylase from Streptococcus thermophilus (strain ATCC BAA-491 / LMD-9).